We begin with the raw amino-acid sequence, 181 residues long: Inner membrane-spanning protein YciB (181 aa).

Transmembrane regions (helical) follow at residues Ile-22–Phe-42, Met-50–Asp-70, Ala-72–Ser-92, Val-118–Phe-138, and Phe-148–Ile-168.

The protein belongs to the YciB family.

Its subcellular location is the cell inner membrane. Functionally, plays a role in cell envelope biogenesis, maintenance of cell envelope integrity and membrane homeostasis. This Shewanella denitrificans (strain OS217 / ATCC BAA-1090 / DSM 15013) protein is Inner membrane-spanning protein YciB.